Here is a 294-residue protein sequence, read N- to C-terminus: Nucleotide-binding protein Tfu_2020 (294 aa).

An ATP-binding site is contributed by 18-25 (GMSGAGRS). Residue 69 to 72 (DVRS) coordinates GTP.

This sequence belongs to the RapZ-like family.

Its function is as follows. Displays ATPase and GTPase activities. In Thermobifida fusca (strain YX), this protein is Nucleotide-binding protein Tfu_2020.